Reading from the N-terminus, the 236-residue chain is MKDFLPAFWAVIPAAGIGARMAADRPKQYLQLGGLTILEHSLLCFLDHPRLKGLVISLAVDDPYWAALPCAKDARIQRVDGGSERSGSVLNALLHLHAQGASDNDWVLVHDAARPNLARSDLDNLLGELADDPVGGLLAVPARDTLKRADSSGRVLETVDRSLIWQAFTPQMFRLGALHRALADSLVSNVSITDEASAIEWAGQSPRLVEGRSDNIKVTRPEDLEWLRQRRTEFGR.

The protein belongs to the IspD/TarI cytidylyltransferase family. IspD subfamily.

It carries out the reaction 2-C-methyl-D-erythritol 4-phosphate + CTP + H(+) = 4-CDP-2-C-methyl-D-erythritol + diphosphate. It participates in isoprenoid biosynthesis; isopentenyl diphosphate biosynthesis via DXP pathway; isopentenyl diphosphate from 1-deoxy-D-xylulose 5-phosphate: step 2/6. Its function is as follows. Catalyzes the formation of 4-diphosphocytidyl-2-C-methyl-D-erythritol from CTP and 2-C-methyl-D-erythritol 4-phosphate (MEP). This Pseudomonas savastanoi pv. phaseolicola (strain 1448A / Race 6) (Pseudomonas syringae pv. phaseolicola (strain 1448A / Race 6)) protein is 2-C-methyl-D-erythritol 4-phosphate cytidylyltransferase.